Reading from the N-terminus, the 337-residue chain is DNA-directed RNA polymerase subunit alpha (337 aa).

Residues 1 to 231 (MRNITISAYT…KQLSVFDKIT (231 aa)) form an alpha N-terminal domain (alpha-NTD) region. An alpha C-terminal domain (alpha-CTD) region spans residues 248–337 (NTKLLQNITD…IAELKAQNEG (90 aa)).

It belongs to the RNA polymerase alpha chain family. Homodimer. The RNAP catalytic core consists of 2 alpha, 1 beta, 1 beta' and 1 omega subunit. When a sigma factor is associated with the core the holoenzyme is formed, which can initiate transcription.

It carries out the reaction RNA(n) + a ribonucleoside 5'-triphosphate = RNA(n+1) + diphosphate. In terms of biological role, DNA-dependent RNA polymerase catalyzes the transcription of DNA into RNA using the four ribonucleoside triphosphates as substrates. This is DNA-directed RNA polymerase subunit alpha from Campylobacter jejuni subsp. doylei (strain ATCC BAA-1458 / RM4099 / 269.97).